Reading from the N-terminus, the 47-residue chain is Potassium channel toxin gamma-KTx 5.1 (47 aa).

4 cysteine pairs are disulfide-bonded: Cys5/Cys23, Cys11/Cys34, Cys20/Cys39, and Cys24/Cys41.

Belongs to the ergtoxin family. Gamma-KTx 5 subfamily. As to expression, expressed by the venom gland.

The protein resides in the secreted. Reversibly blocks Kv11/ERG potassium channels. The protein is Potassium channel toxin gamma-KTx 5.1 of Centruroides sculpturatus (Arizona bark scorpion).